Here is a 376-residue protein sequence, read N- to C-terminus: MPTNNTPFLTIFLLFLGLLRFDSFPGLEAATGKLASIPGLYVFGDSLVDAGNNNYLPISISKANYPHNGVDFPNKKPTGRFCNGKNAADAIAEKFGLPLPPPYLSLRGLLKREKRKSAAVTGVNFASGGAGIFNSSDQKLGQAIPLSKQVNNWLSIHEEVMKLEPSAAQLHLSKSLFTVVIGSNDLFDYFGSFKLRRQSNPQQYTQLMADKLKEQLKRIHDSGARRFLIIGVAQIGCTPGKRAKNSTLHECDEGANMWCSLYNEALVKMLQQLKQELQGSITYTYFDNYKSLHDIISNPARYGFADVTSACCGNGELNADLPCLPLAKLCSDRTKHLFWDRYGHPTEAAARTIVDLMLTDDTHYSSPITLTQLVST.

The first 29 residues, 1 to 29 (MPTNNTPFLTIFLLFLGLLRFDSFPGLEA), serve as a signal peptide directing secretion. The active-site Nucleophile is S46. N134 and N245 each carry an N-linked (GlcNAc...) asparagine glycan. Active-site residues include D340 and H344.

This sequence belongs to the 'GDSL' lipolytic enzyme family.

Its subcellular location is the secreted. The polypeptide is GDSL esterase/lipase At5g55050 (Arabidopsis thaliana (Mouse-ear cress)).